The following is a 359-amino-acid chain: Peptide chain release factor 1 (359 aa).

At Gln236 the chain carries N5-methylglutamine. A disordered region spans residues 286–305; it reads KKEMERSTMRKSQIGSGDRS.

This sequence belongs to the prokaryotic/mitochondrial release factor family. Post-translationally, methylated by PrmC. Methylation increases the termination efficiency of RF1.

The protein localises to the cytoplasm. Peptide chain release factor 1 directs the termination of translation in response to the peptide chain termination codons UAG and UAA. In Wolbachia pipientis wMel, this protein is Peptide chain release factor 1.